We begin with the raw amino-acid sequence, 324 residues long: Virulence-associated V antigen (324 aa).

It is found in the secreted. Functionally, possibly involved in calcium regulation of YOP expression, which includes the export process. This chain is Virulence-associated V antigen (lcrV), found in Yersinia pestis (strain Pestoides F).